Here is a 273-residue protein sequence, read N- to C-terminus: MSQGFIEFPNIDPVLIELGPISVRWYGLMYLVGFMFALWLANRRADQPDSGWTREQVSDLLFAGFLGVVLGGRIGYVLFYNFGLFIDDPLYLFKVWTGGMSFHGGLLGVITAMLWYAKKNGRTFFGVADMIAPLVPFGLGMGRMGNFMNSELWGRVTDVPWAIVFPNGGPLPRHPSQLYEMALEGIVLFFILNWFIKKPRPLGSVSGLFLAGYGTFRFLVEYVREPDAQLGLFGGFISMGQILSLPMVIIGVLMMVWAYKRGHYKDELPQQTK.

A run of 7 helical transmembrane segments spans residues 21–41 (ISVRWYGLMYLVGFMFALWLA), 60–80 (LLFAGFLGVVLGGRIGYVLFY), 95–115 (VWTGGMSFHGGLLGVITAMLW), 124–144 (FFGVADMIAPLVPFGLGMGRM), 176–196 (SQLYEMALEGIVLFFILNWFI), 203–223 (GSVSGLFLAGYGTFRFLVEYV), and 236–256 (FISMGQILSLPMVIIGVLMMV). An a 1,2-diacyl-sn-glycero-3-phospho-(1'-sn-glycerol)-binding site is contributed by Arg143.

The protein belongs to the Lgt family.

It localises to the cell inner membrane. It carries out the reaction L-cysteinyl-[prolipoprotein] + a 1,2-diacyl-sn-glycero-3-phospho-(1'-sn-glycerol) = an S-1,2-diacyl-sn-glyceryl-L-cysteinyl-[prolipoprotein] + sn-glycerol 1-phosphate + H(+). It participates in protein modification; lipoprotein biosynthesis (diacylglyceryl transfer). In terms of biological role, catalyzes the transfer of the diacylglyceryl group from phosphatidylglycerol to the sulfhydryl group of the N-terminal cysteine of a prolipoprotein, the first step in the formation of mature lipoproteins. The protein is Phosphatidylglycerol--prolipoprotein diacylglyceryl transferase of Vibrio atlanticus (strain LGP32) (Vibrio splendidus (strain Mel32)).